A 1203-amino-acid polypeptide reads, in one-letter code: MNTSEREPLLDTTTRNRVYDTTDNPSTKIMKREKDNPKAKTTSFNQGKLNIGEETCDLYAYKETIGRQILFWLLTIVTLGFYQLLAYWVKSLFVKVRFQPTSHDECEYVMVEDIHGTQTIKEVFKAESDVGLARPTRSGKQEKVKVMRFFTYRKIKYIWYEKDQEWLNPADMDSAAPFNIYQKLTLDVIGLKEQDVIASRKIYNMNALALALTPILVILFKEVLGPFYLFQCFSVALWYSDNYAYYASVIVIITVGSAAVAVYQMRAQEKRIRNMVGDTISVIVRRDGHDITIDASEIVPMDILILPSNTFILPCDCLLMNGTVIVNEAMLTGESVPVTKASLKEADECGPEIRLSSEHNRHTLFSGTTVLQTRNYKGQPVMARVIRTGFSTLKGQLVRSIMYPKPQEKEALKDVMVFILVLGFIALIGFIYTVIEMVSRGESLKHIIIRSLDIITIVVPPALPAAMSVGIINANSRLKKKKIFCTSPTTVNVCGLINVACFDKTGTLTEDGLDFNCLKAIRKNEDGKPEFTSEFEELDPVKLSAENANLNIVVAAASCHSLTRIDGTLHGDPLELILVEKSKWIIEEAVNSDEETQDFDTVQPTVLRPPPEQATYHPENNEYSVIKQHPFNSALQRMSVIISTPSEHSAHDMMVFTKGSPEMIASLCIPDTIPEDYMEVVDEYAQRGFRLIAVASKAVHLNFAKALKTPRDIMESELEFLGLIVMENRLKDVTLSVINELSVANIRCVMVTGDNLLTAMSVARECGIIRPTKKAFLITHSKTEKDPLGRTKLFIKESVSSSENDIDTDSEVRAFDRKAVLRTATYQMAIAGPTYSVITHEYPELVDRITAMCDVYARMAPDQKAQLIGALQEIGAKVSMCGDGANDCAALKAAHAGISLSQAEASIAAPFTSNVPDIRCVPTVIKEGRCALVTSYAVSKYMAAYSLNEFLSVMLLYNDGTNISDGQFLYIDLVLITLVALFLGNTEASRKLSGIPPPRRLATSAFYFSVFGQMFFNIITQTTGYLLVRGQSWYVPNPEELDNTTTMIGTTVFFTSCCMYLGYAFVYSKGHPYRRSVFTNWLLCGIIFVIGAINMVMIFTNMGFLMNLMGFVYVPSTSMRFILLAISLAGVFLSLLYEHFFVEKVVAIHFESYLRQRRLRNGDPSLSAYEKILAAIGSSPRWFEDEINLSKSIDRKETIESKC.

The Cytoplasmic segment spans residues 1 to 68; the sequence is MNTSEREPLL…YAYKETIGRQ (68 aa). The segment at 21–42 is disordered; the sequence is TTDNPSTKIMKREKDNPKAKTT. A helical transmembrane segment spans residues 69–89; it reads ILFWLLTIVTLGFYQLLAYWV. Residues 90 to 209 are Extracellular-facing; the sequence is KSLFVKVRFQ…RKIYNMNALA (120 aa). Residues 210 to 230 form a helical membrane-spanning segment; it reads LALTPILVILFKEVLGPFYLF. The Cytoplasmic portion of the chain corresponds to 231–242; the sequence is QCFSVALWYSDN. The chain crosses the membrane as a helical span at residues 243–263; sequence YAYYASVIVIITVGSAAVAVY. Residues 264–297 are Extracellular-facing; that stretch reads QMRAQEKRIRNMVGDTISVIVRRDGHDITIDASE. The helical transmembrane segment at 298 to 318 threads the bilayer; the sequence is IVPMDILILPSNTFILPCDCL. Topologically, residues 319–414 are cytoplasmic; sequence LMNGTVIVNE…KPQEKEALKD (96 aa). Residues 415–435 traverse the membrane as a helical segment; that stretch reads VMVFILVLGFIALIGFIYTVI. Residues 436 to 451 lie on the Extracellular side of the membrane; it reads EMVSRGESLKHIIIRS. The helical transmembrane segment at 452-472 threads the bilayer; sequence LDIITIVVPPALPAAMSVGII. Residues 473–935 are Cytoplasmic-facing; sequence NANSRLKKKK…KEGRCALVTS (463 aa). Catalysis depends on aspartate 503, which acts as the 4-aspartylphosphate intermediate. The interval 595 to 617 is disordered; the sequence is ETQDFDTVQPTVLRPPPEQATYH. 2 residues coordinate Mg(2+): aspartate 883 and aspartate 887. The chain crosses the membrane as a helical span at residues 936–956; that stretch reads YAVSKYMAAYSLNEFLSVMLL. The Extracellular portion of the chain corresponds to 957 to 962; that stretch reads YNDGTN. Residues 963–983 form a helical membrane-spanning segment; it reads ISDGQFLYIDLVLITLVALFL. Topologically, residues 984–1007 are cytoplasmic; sequence GNTEASRKLSGIPPPRRLATSAFY. A helical membrane pass occupies residues 1008 to 1028; it reads FSVFGQMFFNIITQTTGYLLV. Residues 1029-1046 lie on the Extracellular side of the membrane; sequence RGQSWYVPNPEELDNTTT. Residues 1047–1067 traverse the membrane as a helical segment; the sequence is MIGTTVFFTSCCMYLGYAFVY. Over 1068-1085 the chain is Cytoplasmic; that stretch reads SKGHPYRRSVFTNWLLCG. A helical membrane pass occupies residues 1086–1106; it reads IIFVIGAINMVMIFTNMGFLM. At 1107-1120 the chain is on the extracellular side; it reads NLMGFVYVPSTSMR. Residues 1121 to 1141 form a helical membrane-spanning segment; it reads FILLAISLAGVFLSLLYEHFF. Residues 1142-1203 lie on the Cytoplasmic side of the membrane; sequence VEKVVAIHFE…DRKETIESKC (62 aa).

It belongs to the cation transport ATPase (P-type) (TC 3.A.3) family. Type V subfamily. In terms of tissue distribution, expressed in the 20 intestinal cells and in the excretory cell.

The protein localises to the apical cell membrane. It carries out the reaction ATP + H2O = ADP + phosphate + H(+). Functionally, involved in the uptake and/or transport of polyamines, probably through ATP hydrolysis. This contributes to the maintenance of intracellular polyamine levels. Polyamines are essential for cell proliferation and are implicated in cellular processes, ranging from DNA replication to apoptosis. The sequence is that of Cation-transporting ATPase catp-5 from Caenorhabditis elegans.